Reading from the N-terminus, the 339-residue chain is 4-hydroxythreonine-4-phosphate dehydrogenase (339 aa).

Positions 141 and 142 each coordinate substrate. The a divalent metal cation site is built by His-171, His-215, and His-270. Substrate contacts are provided by Lys-278, Asn-287, and Arg-296.

It belongs to the PdxA family. As to quaternary structure, homodimer. Zn(2+) serves as cofactor. It depends on Mg(2+) as a cofactor. The cofactor is Co(2+).

It is found in the cytoplasm. The catalysed reaction is 4-(phosphooxy)-L-threonine + NAD(+) = 3-amino-2-oxopropyl phosphate + CO2 + NADH. It participates in cofactor biosynthesis; pyridoxine 5'-phosphate biosynthesis; pyridoxine 5'-phosphate from D-erythrose 4-phosphate: step 4/5. Catalyzes the NAD(P)-dependent oxidation of 4-(phosphooxy)-L-threonine (HTP) into 2-amino-3-oxo-4-(phosphooxy)butyric acid which spontaneously decarboxylates to form 3-amino-2-oxopropyl phosphate (AHAP). In Geobacter metallireducens (strain ATCC 53774 / DSM 7210 / GS-15), this protein is 4-hydroxythreonine-4-phosphate dehydrogenase.